Consider the following 257-residue polypeptide: MGFLEEVRSYKESQIDTSPEYLRKLEELIEERKEFYDFEKALTSCGTKIIAEVKKASPSEGNIKEVNPEEQAKLYEKAGAIAISVLTDEKYFKGSLEDLRNVRESVKLPLLRKDFTVHKVQILEAKAYGADIVLLIVRMLSDKELKELLDFSEELGLSPLVEVFTLDEAKRALDAGAKIIGINNRDLETFKVDINKTKELAPKIKDLGAKFVISESGISKREEILELMNYQVDGFLIGTSLMKSENPYRKLKELLGF.

It belongs to the TrpC family.

The enzyme catalyses 1-(2-carboxyphenylamino)-1-deoxy-D-ribulose 5-phosphate + H(+) = (1S,2R)-1-C-(indol-3-yl)glycerol 3-phosphate + CO2 + H2O. It functions in the pathway amino-acid biosynthesis; L-tryptophan biosynthesis; L-tryptophan from chorismate: step 4/5. The chain is Indole-3-glycerol phosphate synthase (trpC) from Aquifex aeolicus (strain VF5).